Consider the following 116-residue polypeptide: uncharacterized protein (116 aa).

The chain crosses the membrane as a helical span at residues 52-72 (VFCSANSVPLYLLLLTSALHF).

Its subcellular location is the mitochondrion membrane. This is an uncharacterized protein from Arabidopsis thaliana (Mouse-ear cress).